The primary structure comprises 124 residues: Fluoride-specific ion channel FluC (124 aa).

Transmembrane regions (helical) follow at residues 4–24, 34–54, 67–87, and 100–120; these read FLAV…LGLW, LGTL…LAWF, FVIT…AEVV, and LIAF…FYSL. Residues Gly74 and Thr77 each contribute to the Na(+) site.

The protein belongs to the fluoride channel Fluc/FEX (TC 1.A.43) family.

It is found in the cell inner membrane. The catalysed reaction is fluoride(in) = fluoride(out). Na(+) is not transported, but it plays an essential structural role and its presence is essential for fluoride channel function. Fluoride-specific ion channel. Important for reducing fluoride concentration in the cell, thus reducing its toxicity. The protein is Fluoride-specific ion channel FluC of Thiobacillus denitrificans (strain ATCC 25259 / T1).